Consider the following 108-residue polypeptide: Ig kappa chain V-V region HP R16.7 (108 aa).

The interval 1-23 (DIQMTQTTSSLSASLGDRVTISC) is framework-1. A disulfide bond links C23 and C88. Positions 24–34 (RASQDISNYLN) are complementarity-determining-1. The interval 35–49 (WYQQKPDGTVKLLIY) is framework-2. The segment at 50–56 (YTSRLHS) is complementarity-determining-2. A framework-3 region spans residues 57–88 (GVPSRFSGSGSGTDYSLTISNLEQEDIATYFC). Residues 89 to 97 (QQGNSLPRT) are complementarity-determining-3. The segment at 98 to 108 (FGGGTKLEIKR) is framework-4.

This chain is Ig kappa chain V-V region HP R16.7, found in Mus musculus (Mouse).